The chain runs to 73 residues: uncharacterized protein (73 aa).

A signal peptide spans methionine 1–isoleucine 28.

This is an uncharacterized protein from Bacillus subtilis (strain 168).